The chain runs to 247 residues: Large ribosomal subunit protein uL3 (247 aa).

Disordered regions lie at residues 124–145 (RLGQ…PGSM) and 218–247 (VGQE…ASAE). The segment covering 222–241 (VKAEAKDTASTEKKQAETKN) has biased composition (basic and acidic residues).

It belongs to the universal ribosomal protein uL3 family. Part of the 50S ribosomal subunit. Forms a cluster with proteins L14 and L19.

Its function is as follows. One of the primary rRNA binding proteins, it binds directly near the 3'-end of the 23S rRNA, where it nucleates assembly of the 50S subunit. This is Large ribosomal subunit protein uL3 from Oenococcus oeni (strain ATCC BAA-331 / PSU-1).